The primary structure comprises 102 residues: UPF0473 protein SAS1551 (102 aa).

Belongs to the UPF0473 family.

The polypeptide is UPF0473 protein SAS1551 (Staphylococcus aureus (strain MSSA476)).